Here is a 202-residue protein sequence, read N- to C-terminus: Transcription factor IBH1 (202 aa).

A compositionally biased stretch (pro residues) spans 1–16 (MDAKRTPPPPTPPNPN). The interval 1 to 33 (MDAKRTPPPPTPPNPNPSVIGSGAAADGGGFGR) is disordered. A bHLH domain is found at 136 to 185 (TSAAARAVPPPPRQQGEPPRADALRRLVPGGAGMEYSSLLEETADYLRSL).

It belongs to the bHLH protein family. In terms of assembly, interacts with ILI1.

Functionally, atypical and probable non DNA-binding bHLH transcription factor that acts as a negative regulator of cell elongation and plant development. Binds the transcription factor ILI1 and forms a heterodimer of antagonistic bHLH transcription factors that function downstream of BZR1 to mediate brassinosteroid regulation of cell elongation and lamina inclination. This chain is Transcription factor IBH1 (IBH1), found in Oryza sativa subsp. indica (Rice).